A 426-amino-acid chain; its full sequence is Selenocysteine lyase (426 aa).

N6-(pyridoxal phosphate)lysine is present on K239. The active-site S-selanylcysteine intermediate is the C367.

The protein belongs to the class-V pyridoxal-phosphate-dependent aminotransferase family. Homodimer. Pyridoxal 5'-phosphate serves as cofactor.

It is found in the cytoplasm. The protein localises to the cytosol. It carries out the reaction L-selenocysteine + AH2 = hydrogenselenide + L-alanine + A + H(+). Catalyzes the decomposition of L-selenocysteine to L-alanine and elemental selenium. The polypeptide is Selenocysteine lyase (scly) (Xenopus laevis (African clawed frog)).